We begin with the raw amino-acid sequence, 251 residues long: 14-3-3-like protein (251 aa).

It belongs to the 14-3-3 family. Most abundant in roots and flowers.

The chain is 14-3-3-like protein from Nicotiana tabacum (Common tobacco).